Reading from the N-terminus, the 157-residue chain is Ribonuclease (157 aa).

An N-terminal signal peptide occupies residues 1–34 (MMKMEGIALKKRLSWISVCLLVLVSAAGMLFSTA). The propeptide occupies 35-47 (AKTETSSHKAHTE). Glu120 (proton acceptor) is an active-site residue. Residue His149 is the Proton donor of the active site.

This sequence belongs to the ribonuclease N1/T1 family.

The protein resides in the secreted. In terms of biological role, hydrolyzes phosphodiester bonds in RNA, poly- and oligoribonucleotides resulting in 3'-nucleoside monophosphates via 2',3'-cyclophosphate intermediates. The protein is Ribonuclease of Bacillus amyloliquefaciens (Bacillus velezensis).